A 289-amino-acid polypeptide reads, in one-letter code: MQNRTLPYFLILPSLLLAAVVIFWPVVHLFEIATHDVNRFGQLREFNDGANFTALFATAEFMNALWRTAVWTVAVVGGALVLSIPVAIILNMDFYGRSVARVIIMLPWAVSLTMTAIVWRWALNGESGMLNSALHGLGLIDTNIQWLASAATAFPMQILVGILVTVPFTTTIFLGGLSSIPDDLYEASSLEGASLWQQFREITFPLLKPFVNIAIVLNTIYVFNSFPIIWVMTQGGPANSTDILVTHLYKLAFRLGKLGEASAVSLIMLAILLVFTVIYIRISTRSEQS.

6 helical membrane-spanning segments follow: residues 9–29, 70–90, 99–119, 144–166, 213–233, and 260–280; these read FLILPSLLLAAVVIFWPVVHL, VWTVAVVGGALVLSIPVAIIL, VARVIIMLPWAVSLTMTAIVW, IQWLASAATAFPMQILVGILVTV, IAIVLNTIYVFNSFPIIWVMT, and EASAVSLIMLAILLVFTVIYI. One can recognise an ABC transmembrane type-1 domain in the interval 65–279; that stretch reads LWRTAVWTVA…AILLVFTVIY (215 aa).

The protein belongs to the binding-protein-dependent transport system permease family. In terms of assembly, the complex is composed of two ATP-binding proteins (BRA0745), two transmembrane proteins (BRA0749) and a solute-binding protein (BRA0748).

The protein resides in the cell inner membrane. Functionally, probably part of an ABC transporter complex. Probably responsible for the translocation of the substrate across the membrane. This is Probable ABC transporter permease protein BRA0749/BS1330_II0742 from Brucella suis biovar 1 (strain 1330).